We begin with the raw amino-acid sequence, 506 residues long: Anaerobic nitric oxide reductase transcription regulator NorR (506 aa).

Aspartate 57 carries the 4-aspartylphosphate modification. A Sigma-54 factor interaction domain is found at 187–416 (MIGLSPAMTQ…LEHAIHRAVV (230 aa)). Residues 215 to 222 (GETGTGKE) and 278 to 287 (ADNGTLFLDE) contribute to the ATP site. The H-T-H motif DNA-binding region spans 481–500 (WAASARALETDVANLHRLAK).

Its pathway is nitrogen metabolism; nitric oxide reduction. Required for the expression of anaerobic nitric oxide (NO) reductase, acts as a transcriptional activator for at least the norVW operon. Activation also requires sigma-54. This is Anaerobic nitric oxide reductase transcription regulator NorR from Salmonella agona (strain SL483).